Here is a 361-residue protein sequence, read N- to C-terminus: Peptide chain release factor 1 (361 aa).

At glutamine 235 the chain carries N5-methylglutamine. The disordered stretch occupies residues 287–309; the sequence is QKEASAMRSAQVGSGDRSERIRT.

This sequence belongs to the prokaryotic/mitochondrial release factor family. In terms of processing, methylated by PrmC. Methylation increases the termination efficiency of RF1.

The protein resides in the cytoplasm. In terms of biological role, peptide chain release factor 1 directs the termination of translation in response to the peptide chain termination codons UAG and UAA. The chain is Peptide chain release factor 1 from Chlamydia caviae (strain ATCC VR-813 / DSM 19441 / 03DC25 / GPIC) (Chlamydophila caviae).